A 69-amino-acid polypeptide reads, in one-letter code: U2-agatoxin-Ao1z (69 aa).

A signal peptide spans 1–20; it reads MRAIISLLLISAMVFSMIEA. Residues 21-34 constitute a propeptide that is removed on maturation; sequence VPVEEGLQLFEGER. 3 disulfides stabilise this stretch: Cys37/Cys53, Cys44/Cys58, and Cys52/Cys68.

It belongs to the neurotoxin 01 (U2-agtx) family. In terms of tissue distribution, expressed by the venom gland.

It localises to the secreted. Its function is as follows. Insect active toxin causing rapid but reversible paralysis in crickets. No activity shown in mammals. Does not show effect on mammalian voltage-gated calcium channels. This is U2-agatoxin-Ao1z from Agelena orientalis (Funnel-web spider).